A 361-amino-acid polypeptide reads, in one-letter code: tRNA-specific 2-thiouridylase MnmA (361 aa).

ATP contacts are provided by residues 6-13 and I32; that span reads LVSGGVDS. An interaction with target base in tRNA region spans residues 93 to 95; the sequence is NPD. Residue C98 is the Nucleophile of the active site. C98 and C193 are joined by a disulfide. ATP is bound at residue G121. Residues 143–145 are interaction with tRNA; it reads KDQ. Catalysis depends on C193, which acts as the Cysteine persulfide intermediate.

Belongs to the MnmA/TRMU family.

Its subcellular location is the cytoplasm. It carries out the reaction S-sulfanyl-L-cysteinyl-[protein] + uridine(34) in tRNA + AH2 + ATP = 2-thiouridine(34) in tRNA + L-cysteinyl-[protein] + A + AMP + diphosphate + H(+). Functionally, catalyzes the 2-thiolation of uridine at the wobble position (U34) of tRNA, leading to the formation of s(2)U34. The chain is tRNA-specific 2-thiouridylase MnmA from Porphyromonas gingivalis (strain ATCC BAA-308 / W83).